Consider the following 545-residue polypeptide: CTP synthase (545 aa).

The segment at 1–266 (MKTKFIFITG…DQKIAIMLKL (266 aa)) is amidoligase domain. S14 provides a ligand contact to CTP. S14 contacts UTP. Residues 15-20 (SLGKGL) and D72 each bind ATP. Mg(2+) is bound by residues D72 and E140. Residues 147–149 (DIE), 187–192 (KTKPTQ), and K223 each bind CTP. UTP-binding positions include 187–192 (KTKPTQ) and K223. The 255-residue stretch at 291–545 (TIGIVGKYVD…IKASCENKNK (255 aa)) folds into the Glutamine amidotransferase type-1 domain. G353 contributes to the L-glutamine binding site. The active-site Nucleophile; for glutamine hydrolysis is the C380. Residues 381–384 (LGMQ), E404, and R472 each bind L-glutamine. Residues H518 and E520 contribute to the active site.

Belongs to the CTP synthase family. As to quaternary structure, homotetramer.

It catalyses the reaction UTP + L-glutamine + ATP + H2O = CTP + L-glutamate + ADP + phosphate + 2 H(+). The enzyme catalyses L-glutamine + H2O = L-glutamate + NH4(+). It carries out the reaction UTP + NH4(+) + ATP = CTP + ADP + phosphate + 2 H(+). It participates in pyrimidine metabolism; CTP biosynthesis via de novo pathway; CTP from UDP: step 2/2. Its activity is regulated as follows. Allosterically activated by GTP, when glutamine is the substrate; GTP has no effect on the reaction when ammonia is the substrate. The allosteric effector GTP functions by stabilizing the protein conformation that binds the tetrahedral intermediate(s) formed during glutamine hydrolysis. Inhibited by the product CTP, via allosteric rather than competitive inhibition. Catalyzes the ATP-dependent amination of UTP to CTP with either L-glutamine or ammonia as the source of nitrogen. Regulates intracellular CTP levels through interactions with the four ribonucleotide triphosphates. This is CTP synthase from Maridesulfovibrio salexigens (strain ATCC 14822 / DSM 2638 / NCIMB 8403 / VKM B-1763) (Desulfovibrio salexigens).